The following is a 600-amino-acid chain: Elongation factor 4 (600 aa).

The 183-residue stretch at 5 to 187 folds into the tr-type G domain; the sequence is KYIRNFSIIA…AIVNKLHPPK (183 aa). GTP is bound by residues 17–22 and 134–137; these read DHGKST and NKID.

Belongs to the TRAFAC class translation factor GTPase superfamily. Classic translation factor GTPase family. LepA subfamily.

The protein resides in the cell inner membrane. It carries out the reaction GTP + H2O = GDP + phosphate + H(+). Required for accurate and efficient protein synthesis under certain stress conditions. May act as a fidelity factor of the translation reaction, by catalyzing a one-codon backward translocation of tRNAs on improperly translocated ribosomes. Back-translocation proceeds from a post-translocation (POST) complex to a pre-translocation (PRE) complex, thus giving elongation factor G a second chance to translocate the tRNAs correctly. Binds to ribosomes in a GTP-dependent manner. This chain is Elongation factor 4, found in Rickettsia akari (strain Hartford).